We begin with the raw amino-acid sequence, 262 residues long: Putative outer membrane protein CPn_1034/CP_0818/CPj1034/CpB1074 (262 aa).

The N-terminal stretch at 1-17 (MKTWLFFTFLFSCSSFY) is a signal peptide.

It is found in the cell outer membrane. In Chlamydia pneumoniae (Chlamydophila pneumoniae), this protein is Putative outer membrane protein CPn_1034/CP_0818/CPj1034/CpB1074.